Consider the following 184-residue polypeptide: MDLTQFNTAGIVWLTVAAIAISYILQSSFLSWYRLRHIPGPFLASISSLWNVLNIVTGRTSPVLEKLPGRYGPLVRTGPNYVLTDDAEILRHVNGVRSTYPRNGWYEGFRVDEYDHMGSHIDTSVHDAIKSKVIGGYNGKDGIDLEGAIGSQVKTLVSEIRRTRGSRPRSRPRWMPARWSRSSP.

The helical transmembrane segment at 10–30 (GIVWLTVAAIAISYILQSSFL) threads the bilayer. Residues 161-184 (RRTRGSRPRSRPRWMPARWSRSSP) form a disordered region. Basic residues predominate over residues 163-172 (TRGSRPRSRP). Low complexity predominate over residues 173-184 (RWMPARWSRSSP).

The protein belongs to the cytochrome P450 family.

It localises to the membrane. Its function is as follows. Cytochrome P450 monooxygenase; part of the gene cluster that mediates the biosynthesis of loline alkaloids, potent insecticidal agents composed of a pyrrolizidine ring system and an uncommon ether bridge linking carbons 2 and 7. Lolines are structurally differentiated by the various modifications of the L-amino group and include norloline, loline, N-methylloline, N-acetylloline, N-acetylnorloline, and N-formylloline. The first committed step is the condensation of O-acetyl-L-homoserine (derived from L-aspartic acid) and L-proline, probably catalyzed by the gamma-type pyridoxal 5'-phosphate(PLP)-dependent enzyme lolC, to give the diamino diacid, NACPP. Ensuing cyclization, decarboxylation, and acetylation steps yield 1-exo-acetamidopyrrolizidine (AcAP). LolO is required for installation of the ether bridge upon the pathway intermediate, 1-exo-acetamidopyrrolizidine (AcAP). In sequential 2-oxoglutarate- and O(2)-consuming steps, lolO removes hydrogens from C2 and C7 of AcAP to form both carbon-oxygen bonds in N-acetylnorloline (NANL), the precursor to all other lolines. The enzymes lolD, lolE, lolF and lolT have also been proposed to be involved in the ether-bridge installation. Further processing of the exocyclic moiety of NANL by fungal N-acetamidase (LolN), methyltransferase (LolM), and cytochrome P450 (LolP) enzymes, with occasional involvement of a plant acetyltransferase, generates the other known lolines. LolN transforms NANL to norlonine which is monomethylated and dimethylated to respectively lonine and N-methyllonine (NML) by lolM. LolP catalyzes hydroxylation of the methyl group in N-methylloline (NML) and further oxygenation to N-formylloline (NFL). A plant acetyltransferase is responsible for the acetylation of loline to form N-acetylloline (NAL). LolA might interact with aspartate kinase to prevent feedback inhibition of its activity by these end products and thereby promote production of L-homoserine from L-aspartate. This chain is Inactive cytochrome P450 monooxygenase lolP2, found in Epichloe uncinata (Endophyte fungus).